A 518-amino-acid chain; its full sequence is Phenylacetate 2-hydroxylase (518 aa).

Residue C437 coordinates heme.

Belongs to the cytochrome P450 family.

It carries out the reaction 2-phenylacetate + reduced [NADPH--hemoprotein reductase] + O2 = (2-hydroxyphenyl)acetate + oxidized [NADPH--hemoprotein reductase] + H2O + H(+). It participates in aromatic compound metabolism; phenylacetate degradation. In terms of biological role, catalyzes the hydroxylation of phenylacetate to 2-hydroxyphenylacetate in the homogentisate pathway. The homogentisate pathway is used to catabolize phenylacetate and use it as a carbon source. Can also catalyze the hydroxylation of 3-hydroxyphenylacetate to 2,5-dihydroxyphenylacetate (homogentisate) at low efficiency. In Emericella nidulans (Aspergillus nidulans), this protein is Phenylacetate 2-hydroxylase (phacA).